The following is a 103-amino-acid chain: N(4)-acetylcytidine amidohydrolase (103 aa).

The 87-residue stretch at 6–92 (TFFERFEPGI…VIQEIYPGLE (87 aa)) folds into the ASCH domain. The active-site Proton acceptor is the K20. Residue T23 is the Nucleophile of the active site. E73 functions as the Proton donor in the catalytic mechanism.

This sequence belongs to the N(4)-acetylcytidine amidohydrolase family.

The enzyme catalyses N(4)-acetylcytidine + H2O = cytidine + acetate + H(+). It catalyses the reaction N(4)-acetyl-2'-deoxycytidine + H2O = 2'-deoxycytidine + acetate + H(+). The catalysed reaction is N(4)-acetylcytosine + H2O = cytosine + acetate + H(+). Catalyzes the hydrolysis of N(4)-acetylcytidine (ac4C). The sequence is that of N(4)-acetylcytidine amidohydrolase from Shewanella sp. (strain MR-7).